We begin with the raw amino-acid sequence, 369 residues long: Flagellar P-ring protein (369 aa).

The N-terminal stretch at 1–22 (MTKFKHLLALAALLLAAGAAQA) is a signal peptide.

The protein belongs to the FlgI family. As to quaternary structure, the basal body constitutes a major portion of the flagellar organelle and consists of four rings (L,P,S, and M) mounted on a central rod.

It localises to the periplasm. The protein localises to the bacterial flagellum basal body. Functionally, assembles around the rod to form the L-ring and probably protects the motor/basal body from shearing forces during rotation. In Pseudomonas aeruginosa (strain LESB58), this protein is Flagellar P-ring protein.